The following is a 1042-amino-acid chain: Sarcoplasmic/endoplasmic reticulum calcium ATPase 2 (1042 aa).

Over 1–48 (MENAHTKTVEEVLGHFGVNESTGLSLEQVKKLKERWGSNELPAEEGKT) the chain is Cytoplasmic. Phosphoserine is present on serine 38. The helical transmembrane segment at 49–69 (LLELVIEQFEDLLVRILLLAA) threads the bilayer. The Lumenal portion of the chain corresponds to 70–89 (CISFVLAWFEEGEETITAFV). The helical transmembrane segment at 90–110 (EPFVILLILVANAIVGVWQER) threads the bilayer. Topologically, residues 111–253 (NAENAIEALK…QERTPLQQKL (143 aa)) are cytoplasmic. The helical transmembrane segment at 254 to 273 (DEFGEQLSKVISLICIAVWI) threads the bilayer. Topologically, residues 274–295 (INIGHFNDPVHGGSWIRGAIYY) are lumenal. 2 positions are modified to 3'-nitrotyrosine: tyrosine 294 and tyrosine 295. Residues 296-313 (FKIAVALAVAAIPEGLPA) traverse the membrane as a helical segment. Ca(2+)-binding residues include valine 304, alanine 305, isoleucine 307, and glutamate 309. The Cytoplasmic segment spans residues 314–756 (VITTCLALGT…EEGRAIYNNM (443 aa)). The active-site 4-aspartylphosphate intermediate is aspartate 351. Mg(2+) contacts are provided by aspartate 351 and threonine 353. Threonine 353 is a binding site for ATP. Threonine 441 is subject to Phosphothreonine. ATP is bound by residues glutamate 442, arginine 489, and lysine 514. Serine 531 carries the phosphoserine modification. Arginine 559 lines the ATP pocket. An interaction with HAX1 region spans residues 575–594 (MHLKDSANFIKYETNLTFVG). Serine 580 carries the post-translational modification Phosphoserine. Residues threonine 624, glycine 625, and aspartate 626 each contribute to the ATP site. Serine 663 carries the phosphoserine modification. Residues arginine 677 and lysine 683 each coordinate ATP. Mg(2+) is bound at residue aspartate 702. An ATP-binding site is contributed by asparagine 705. Residues 757–776 (KQFIRYLISSNVGEVVCIFL) traverse the membrane as a helical segment. Residues asparagine 767 and glutamate 770 each coordinate Ca(2+). Topologically, residues 777–786 (TAALGFPEAL) are lumenal. The chain crosses the membrane as a helical span at residues 787-807 (IPVQLLWVNLVTDGLPATALG). The segment at 787-807 (IPVQLLWVNLVTDGLPATALG) is interaction with PLN. The tract at residues 788-1042 (PVQLLWVNLV…DTNFSDLLWS (255 aa)) is interaction with TMEM64 and PDIA3. Ca(2+)-binding residues include asparagine 795, threonine 798, and aspartate 799. Topologically, residues 808–827 (FNPPDLDIMNKPPRNPKEPL) are cytoplasmic. A helical membrane pass occupies residues 828–850 (ISGWLFFRYLAIGCYVGAATVGA). At 851 to 896 (AAWWFIAADGGPRVSFYQLSHFLQCKEDNPDFEGVDCAIFESPYPM) the chain is on the lumenal side. A disulfide bridge connects residues cysteine 875 and cysteine 887. The chain crosses the membrane as a helical span at residues 897-916 (TMALSVLVTIEMCNALNSLS). Position 907 (glutamate 907) interacts with Ca(2+). Residues 917-929 (ENQSLLRMPPWEN) lie on the Cytoplasmic side of the membrane. Residues 930–948 (IWLVGSICLSMSLHFLILY) form a helical membrane-spanning segment. Positions 931–942 (WLVGSICLSMSL) are interaction with PLN. The Lumenal segment spans residues 949–963 (VEPLPLIFQITPLNV). Residues 964-984 (TQWLMVLKISLPVILMDETLK) form a helical membrane-spanning segment. The Cytoplasmic portion of the chain corresponds to 985 to 1042 (FVARNYLEPGKECVQPAPQSCSLWACTEGVSWPFVLLIVPLVMWVYSTDTNFSDLLWS).

The protein belongs to the cation transport ATPase (P-type) (TC 3.A.3) family. Type IIA subfamily. As to quaternary structure, interacts with sarcolipin (SLN); the interaction inhibits ATP2A2 Ca(2+) affinity. Interacts with phospholamban (PLN); the interaction inhibits ATP2A2 Ca(2+) affinity. Interacts with myoregulin (MRLN). Interacts with ARLN and ERLN; the interactions inhibit ATP2A2 Ca(2+) affinity. Interacts with SRTIT1/DWORF; the interaction results in activation of ATP2A2. Interacts with the monomeric forms of SLN, PLN, ARLN, ERLN and STRI1/DWORF. Interacts with HAX1. Interacts with S100A8 and S100A9. Interacts with SLC35G1 and STIM1. Interacts with TMEM203. Interacts with TMEM64 and PDIA3. Interacts with TMX1. Interacts with TMX2. Interacts with VMP1; VMP1 competes with PLN and SLN to prevent them from forming an inhibitory complex with ATP2A2. Interacts with ULK1. Interacts with TUNAR. Interacts with FLVCR2; this interaction occurs in the absence of heme and promotes ATP2A2 proteasomal degradation; this complex is dissociated upon heme binding. Interacts with FNIP1. In terms of assembly, interacts with TRAM2 (via C-terminus). Requires Mg(2+) as cofactor. In terms of processing, nitrated under oxidative stress. Nitration on the two tyrosine residues inhibits catalytic activity. Post-translationally, serotonylated on Gln residues by TGM2 in response to hypoxia, leading to its inactivation. Isoform 2 is highly expressed in heart and slow twitch skeletal muscle. Isoform 1 is widely expressed.

It localises to the endoplasmic reticulum membrane. Its subcellular location is the sarcoplasmic reticulum membrane. The catalysed reaction is Ca(2+)(in) + ATP + H2O = Ca(2+)(out) + ADP + phosphate + H(+). With respect to regulation, has different conformational states with differential Ca2+ affinity. The E1 conformational state (active form) shows high Ca(2+) affinity, while the E2 state exhibits low Ca(2+) affinity. Binding of ATP allosterically increases its affinity for subsequent binding of Ca2+. Reversibly inhibited by phospholamban (PLN) at low calcium concentrations. PLN inhibits ATP2A2 Ca(2+) affinity by disrupting its allosteric activation by ATP. Inhibited by sarcolipin (SLN) and myoregulin (MRLN). The inhibition is blocked by VMP1. Enhanced by STRIT1/DWORF; STRIT1 increases activity by displacing sarcolipin (SLN), phospholamban (PLN) and myoregulin (MRLN). Stabilizes SERCA2 in its E2 state. This magnesium-dependent enzyme catalyzes the hydrolysis of ATP coupled with the translocation of calcium from the cytosol to the sarcoplasmic reticulum lumen. Involved in autophagy in response to starvation. Upon interaction with VMP1 and activation, controls ER-isolation membrane contacts for autophagosome formation. Also modulates ER contacts with lipid droplets, mitochondria and endosomes. In coordination with FLVCR2 mediates heme-stimulated switching from mitochondrial ATP synthesis to thermogenesis. Its function is as follows. Involved in the regulation of the contraction/relaxation cycle. Acts as a regulator of TNFSF11-mediated Ca(2+) signaling pathways via its interaction with TMEM64 which is critical for the TNFSF11-induced CREB1 activation and mitochondrial ROS generation necessary for proper osteoclast generation. Association between TMEM64 and SERCA2 in the ER leads to cytosolic Ca(2+) spiking for activation of NFATC1 and production of mitochondrial ROS, thereby triggering Ca(2+) signaling cascades that promote osteoclast differentiation and activation. The chain is Sarcoplasmic/endoplasmic reticulum calcium ATPase 2 (ATP2A2) from Oryctolagus cuniculus (Rabbit).